The following is a 412-amino-acid chain: COP9 signalosome complex subunit 4 (412 aa).

The PCI domain occupies 216–378 (EAAQRYYELS…GILHFEDSNP (163 aa)).

The protein belongs to the CSN4 family. As to quaternary structure, component of the CSN complex, probably composed of csn-1, csn-2, csn-3, csn-4, csn-5, csn-6 and csn-7. Within the complex it probably interacts directly with csn-2 and csn-4. In the complex, it probably interacts directly with csn-1, csn-2, csn-3 and csn-6. Interacts with itself.

The protein localises to the cytoplasm. It is found in the nucleus. Its function is as follows. Component of the COP9 signalosome complex (CSN), a complex involved in various cellular and developmental processes. The CSN complex is an essential regulator of the ubiquitin (Ubl) conjugation pathway by mediating the deneddylation of the cullin subunits of the SCF-type E3 ligase complexes, leading to decrease the Ubl ligase activity of SCF. The CSN complex plays an essential role in embryogenesis and oogenesis and is required to regulate microtubule stability in the early embryo. Mediates mei-3/katanin targeting for degradation at the meiosis to mitosis transition via deneddylation of cul-3. In Caenorhabditis elegans, this protein is COP9 signalosome complex subunit 4 (csn-4).